Reading from the N-terminus, the 397-residue chain is Argininosuccinate synthase (397 aa).

8–16 is a binding site for ATP; that stretch reads AYSGGLDTS. Positions 86 and 91 each coordinate L-citrulline. G116 serves as a coordination point for ATP. L-aspartate contacts are provided by T118, N122, and D123. Residue N122 coordinates L-citrulline. L-citrulline-binding residues include R126, S175, S184, E260, and Y272.

The protein belongs to the argininosuccinate synthase family. Type 1 subfamily. Homotetramer.

The protein localises to the cytoplasm. The enzyme catalyses L-citrulline + L-aspartate + ATP = 2-(N(omega)-L-arginino)succinate + AMP + diphosphate + H(+). Its pathway is amino-acid biosynthesis; L-arginine biosynthesis; L-arginine from L-ornithine and carbamoyl phosphate: step 2/3. This is Argininosuccinate synthase from Clostridium botulinum (strain 657 / Type Ba4).